The following is a 130-amino-acid chain: Small ribosomal subunit protein uS8 (130 aa).

Belongs to the universal ribosomal protein uS8 family. Part of the 30S ribosomal subunit. Contacts proteins S5 and S12.

In terms of biological role, one of the primary rRNA binding proteins, it binds directly to 16S rRNA central domain where it helps coordinate assembly of the platform of the 30S subunit. The chain is Small ribosomal subunit protein uS8 from Aeromonas salmonicida (strain A449).